A 2013-amino-acid chain; its full sequence is MGDEEAPSGSIEDRINHKNWKWRVSGLEELTTKFRNSIEGSGPLFNEWGPQFKKILADINPMSQERALEPLSAFIDRCDCVNKFAASYVGVLVEKLFASTRPRAKEKTIECLLLTIEADSAEPVVEALLKGTSSTSPKILLASLAALTQALKTFGPKQIPVKLILKQFSPWFENRDKGIRDQASELFIEIYRWIGKALIPLISEALTPIQLKALQDQFEKLPTDPAVPLKYTRSEAAKALANASKGIQAKPEVVEEIDPYSLMTAVNILPKLTSEFYEGLQAKKWQERSEQMDKLVTILTNTPKIETADFSELCKALKKILADVNVMIVQKAVVSIGLLADSLRGGFTSYVKPFITPILEKFKEKKTSVLQSVHTTMDSLVGKSISLSDIIDELTATMQSKVPQIKQEVLVFICNSITNTKKPADITKVTKQLTKIFMEALNDTDSNIRDNASKAFAALGGIIGERAMTPYLNQIDPIKAKKIKDNMPAVATPVTITPQPLAPVDLKDIDLPVSSSNKKPAAATGNSKSSSTTTPTGRSSNSSPLPPPPSSSDDIKNKLIGAGIVNNEIIEGLGKTQWKDRLQAVDDILENVKGLTADSINGMSESIIQLLCDKPSLKESNFQVLSSIFSIFIQCCKNDSNFTQQRCANSYLTTCIEKLTDVKLKEISSELLFSTGESITPHAVFTSIYQFTSNHKNPKIIADSLVWIQQAIDEFGIGCCSNGIQQLKPLLDYTKQCLESTNPDVKKSAIKLLCTIKINIGATLTDFLGDVKKPTMEVLDREFQKIRDQKPPVPNRQWKGMPPPGSAPVQIEFPRVDISVKLTPAIITNLSDANWKTRSDALDEIERIIIDANRKIQPKLGGLIPALKNRLTDNNQKCTITTLNIIGMLSQAMGGQSFEKHARLLIPGILLLLGDSKKPVRDAVISCMNVIVQSDLGFDVFIGSLAAPMIQESAFTRKESLAWTIVNVTNMKAAPIPSEINTLAKGIISCLQDKSAEIRSLADNLLSILCTQIPLIEFKKELKHVKPASQPSIQTILDKYYQKTGQPIPPPSKTKQSTSSSSSSSSTTSQQSSTPSSPQPIRQQQQQQQQQPTQPQQQQQQQQRRSILQSNNGASNCEFIIFDINGKMNRQKTNQIPSWHFIEPTEEVVEILQDQVLQCFTEEFANLMFSSLPSNSQHMSDLMIGMIEQNPEAIISVLDILFRWITFKLFDTGLASQKRVLKILEILLNKLIDSEYSIGEYEASCLVPILLEKSGSATNEQIKQIFKQSIQQLEELCLPNVLFRFAIEMVTSQNWRTRVEVLNVMASIIDKNGASVCGNLKVVIPLITQNLNDSQSKQSSLLCLNKLYSHIKDECFKYSNISQQDKILIIGNNNNNNNNNNNNNNNNNNNNVQQQQQQQQQQQQQQPRKSLSTDEMSTQLIGCLELLKNYSITKENIEHTVEALKQFSGLMANGKLDDVFVNFAEEYFLVLTSILADTFPQVSKDATILRLCKYLIHTIISILSNKVVAKQCNVRCLEIVLNETIKLYSLAESNSSKQGTESELSKAFNQILLRILQNCNSTILFSTLLQMMSRTDNDQSIQHPGKYNDLLLRCLLRATKSLTTPSILEELNVETVLSEINSFLKSNPSLDEITRKTTKTLTSELYQNRTNQVVKFTKDIISKGQQQKYQYLLNLLIELVPKQFEDLINGNGNGNRISSGGSNNNNNNGGRVSSGGNNNNNSGRENINNININSSLDSPINDHHNSNNTTTTTTRSRTSTGSSNSQQQQLPTTSANTTTTTTTTTTTGKTQSTLSTLKINKEPRDYSGKTDSQKKELLIEIFKKIGNKDLTLDGIHDLYFFIREYPDYDITPNLNSSSQQFQAYITRNLKKIKDSMDAPKDKDDEVVNYQERLKVIQNTFYNQHNQPSSQVVNNNNNNNNNNNNNNNNNINNNNNNNNNSGGNENIAPQLSNTASMASNTLQRLRTLNPDQNSGSNNNNSHQNSPSTSSSNDLNSTVASLRQRLAQLTSKSNE.

HEAT repeat units lie at residues 115–153, 158–196, 200–238, 348–386, and 427–465; these read TIEADSAEPVVEALLKGTSSTSPKILLASLAALTQALKT, QIPVKLILKQFSPWFENRDKGIRDQASELFIEIYRWIGK, PLISEALTPIQLKALQDQFEKLPTDPAVPLKYTRSEAAK, TSYVKPFITPILEKFKEKKTSVLQSVHTTMDSLVGKSIS, and TKVTKQLTKIFMEALNDTDSNIRDNASKAFAALGGIIGE. Residues 512 to 557 are disordered; that stretch reads PVSSSNKKPAAATGNSKSSSTTTPTGRSSNSSPLPPPPSSSDDIKN. Residues 524–543 show a composition bias toward low complexity; sequence TGNSKSSSTTTPTGRSSNSS. HEAT repeat units follow at residues 724-762, 816-854, 857-895, 899-937, and 977-1015; these read IQQLKPLLDYTKQCLESTNPDVKKSAIKLLCTIKINIGA, VDISVKLTPAIITNLSDANWKTRSDALDEIERIIIDANR, QPKLGGLIPALKNRLTDNNQKCTITTLNIIGMLSQAMGG, EKHARLLIPGILLLLGDSKKPVRDAVISCMNVIVQSDLG, and PSEINTLAKGIISCLQDKSAEIRSLADNLLSILCTQIPL. Positions 1043–1109 are disordered; that stretch reads KTGQPIPPPS…QQQQRRSILQ (67 aa). Positions 1053–1106 are enriched in low complexity; sequence KTKQSTSSSSSSSSTTSQQSSTPSSPQPIRQQQQQQQQQPTQPQQQQQQQQRRS. HEAT repeat units follow at residues 1240 to 1279, 1281 to 1314, and 1317 to 1353; these read EYEASCLVPILLEKSGSATNEQIKQIFKQSIQQLEELCLP, VLFRFAIEMVTSQNWRTRVEVLNVMASIIDKNGA, and CGNLKVVIPLITQNLNDSQSKQSSLLCLNKLYSHIKD. Low complexity-rich tracts occupy residues 1372 to 1406, 1695 to 1735, and 1746 to 1796; these read NNNNNNNNNNNNNNNNNNNNVQQQQQQQQQQQQQQ, NRIS…INSS, and SNNT…TLST. 4 disordered regions span residues 1372–1413, 1695–1809, 1905–1949, and 1966–1995; these read NNNN…SLST, NRIS…YSGK, NQPS…IAPQ, and TLNPDQNSGSNNNNSHQNSPSTSSSNDLNS. The span at 1799–1809 shows a compositional bias: basic and acidic residues; it reads INKEPRDYSGK. Residues 1913–1939 are compositionally biased toward low complexity; that stretch reads NNNNNNNNNNNNNNNNNINNNNNNNNN. Positions 1940–1949 are enriched in polar residues; the sequence is SGGNENIAPQ. Low complexity predominate over residues 1967 to 1995; sequence LNPDQNSGSNNNNSHQNSPSTSSSNDLNS.

It belongs to the TOG/XMAP215 family. Interacts with eb1 at the microtubule tip, centrosome and kinetochore. Interacts with lis1 in the cortical attachment of microtubules.

It is found in the cytoplasm. The protein resides in the cytoskeleton. It localises to the microtubule organizing center. Its subcellular location is the centrosome. The protein localises to the chromosome. It is found in the centromere. The protein resides in the kinetochore. Involved in regulation of microtubule dynamics. Regulates the interaction of microtubules tips with the centrosome and cell cortex. In Dictyostelium discoideum (Social amoeba), this protein is Centrosomal protein 224 (mtaA).